A 60-amino-acid chain; its full sequence is Large ribosomal subunit protein uL30 (60 aa).

This sequence belongs to the universal ribosomal protein uL30 family. In terms of assembly, part of the 50S ribosomal subunit.

The chain is Large ribosomal subunit protein uL30 from Streptomyces griseus subsp. griseus (strain JCM 4626 / CBS 651.72 / NBRC 13350 / KCC S-0626 / ISP 5235).